We begin with the raw amino-acid sequence, 426 residues long: Serine--tRNA ligase (426 aa).

233–235 (TAE) lines the L-serine pocket. 264–266 (RSE) provides a ligand contact to ATP. Position 287 (Glu-287) interacts with L-serine. 351–354 (EISS) lines the ATP pocket. Ser-387 is a binding site for L-serine.

The protein belongs to the class-II aminoacyl-tRNA synthetase family. Type-1 seryl-tRNA synthetase subfamily. As to quaternary structure, homodimer. The tRNA molecule binds across the dimer.

Its subcellular location is the cytoplasm. The enzyme catalyses tRNA(Ser) + L-serine + ATP = L-seryl-tRNA(Ser) + AMP + diphosphate + H(+). It catalyses the reaction tRNA(Sec) + L-serine + ATP = L-seryl-tRNA(Sec) + AMP + diphosphate + H(+). The protein operates within aminoacyl-tRNA biosynthesis; selenocysteinyl-tRNA(Sec) biosynthesis; L-seryl-tRNA(Sec) from L-serine and tRNA(Sec): step 1/1. In terms of biological role, catalyzes the attachment of serine to tRNA(Ser). Is also able to aminoacylate tRNA(Sec) with serine, to form the misacylated tRNA L-seryl-tRNA(Sec), which will be further converted into selenocysteinyl-tRNA(Sec). This Pseudomonas aeruginosa (strain LESB58) protein is Serine--tRNA ligase.